The chain runs to 252 residues: Uridylate kinase (252 aa).

An ATP-binding site is contributed by 23–26; it reads KLSG. G65 provides a ligand contact to UMP. Residues G66 and R70 each coordinate ATP. Residues D85 and 146–153 each bind UMP; that span reads LGAPFFST. The ATP site is built by T173, Q174, Y179, and D182.

The protein belongs to the UMP kinase family. In terms of assembly, homohexamer.

The protein localises to the cytoplasm. It carries out the reaction UMP + ATP = UDP + ADP. The protein operates within pyrimidine metabolism; CTP biosynthesis via de novo pathway; UDP from UMP (UMPK route): step 1/1. Its activity is regulated as follows. Inhibited by UTP. Its function is as follows. Catalyzes the reversible phosphorylation of UMP to UDP. In Thermobifida fusca (strain YX), this protein is Uridylate kinase.